The chain runs to 209 residues: Ribosomal RNA large subunit methyltransferase E (209 aa).

The S-adenosyl-L-methionine site is built by Gly63, Trp65, Asp83, Asp99, and Asp124. Lys164 serves as the catalytic Proton acceptor.

It belongs to the class I-like SAM-binding methyltransferase superfamily. RNA methyltransferase RlmE family.

It is found in the cytoplasm. The catalysed reaction is uridine(2552) in 23S rRNA + S-adenosyl-L-methionine = 2'-O-methyluridine(2552) in 23S rRNA + S-adenosyl-L-homocysteine + H(+). Functionally, specifically methylates the uridine in position 2552 of 23S rRNA at the 2'-O position of the ribose in the fully assembled 50S ribosomal subunit. The polypeptide is Ribosomal RNA large subunit methyltransferase E (Colwellia psychrerythraea (strain 34H / ATCC BAA-681) (Vibrio psychroerythus)).